Here is a 380-residue protein sequence, read N- to C-terminus: Transmembrane protein 229A (380 aa).

The interval 1–40 (MAGSDVDSEGPARRGGAARRPGAPGGPGSEAAAGCPEPLS) is disordered. A run of 2 helical transmembrane segments spans residues 51–71 (LPAWMRLYFYGMHGITLDVLV) and 117–137 (AFVFNFLLYPSAHVGLQTLAG). The disordered stretch occupies residues 188–236 (RQQQQQQQQQQQQRRGALPVPPGARVPTAAGARRRRPRGPRGAGGAPSQ). Over residues 190 to 202 (QQQQQQQQQQQRR) the composition is skewed to low complexity. Transmembrane regions (helical) follow at residues 244 to 264 (FLFFGMHGFLDEIFFTFFFNV), 278 to 298 (LWSFFMYGSCSFVVEKLYFHL), 310 to 330 (VPIYVIFIYVWELSWGLGLRT), and 343 to 363 (LNFMGLITLMYLPGWIFLSVY).

It belongs to the TMEM229 family.

It localises to the membrane. This chain is Transmembrane protein 229A (TMEM229A), found in Homo sapiens (Human).